A 498-amino-acid chain; its full sequence is ATP synthase subunit beta, chloroplastic (498 aa).

172–179 contributes to the ATP binding site; it reads GGAGVGKT.

The protein belongs to the ATPase alpha/beta chains family. In terms of assembly, F-type ATPases have 2 components, CF(1) - the catalytic core - and CF(0) - the membrane proton channel. CF(1) has five subunits: alpha(3), beta(3), gamma(1), delta(1), epsilon(1). CF(0) has four main subunits: a(1), b(1), b'(1) and c(9-12).

Its subcellular location is the plastid. The protein resides in the chloroplast thylakoid membrane. It catalyses the reaction ATP + H2O + 4 H(+)(in) = ADP + phosphate + 5 H(+)(out). In terms of biological role, produces ATP from ADP in the presence of a proton gradient across the membrane. The catalytic sites are hosted primarily by the beta subunits. The sequence is that of ATP synthase subunit beta, chloroplastic from Lactuca sativa (Garden lettuce).